Here is a 79-residue protein sequence, read N- to C-terminus: Neurotoxin 3FTx-LI (79 aa).

A signal peptide spans 1 to 21 (MKTLLLTLVVVTIVCLDLGYT). 4 disulfides stabilise this stretch: C24/C43, C36/C61, C65/C71, and C72/C77.

In terms of tissue distribution, expressed by the venom gland.

It localises to the secreted. In terms of biological role, blocks both the muscle-twitch response to nerve stimulation and the response to exogenous acetylcholine. The sequence is that of Neurotoxin 3FTx-LI from Bungarus fasciatus (Banded krait).